A 525-amino-acid chain; its full sequence is DNA polymerase epsilon subunit 2 (525 aa).

It belongs to the DNA polymerase epsilon subunit B family. Component of the epsilon DNA polymerase complex consisting of four subunits: the catalytic subunit PolE1/DNApol-epsilon255 and the accessory subunits PolE2/DNApol-epsilon58, Chrac-14/DNApolE3 and PolE4.

It is found in the nucleus. Its function is as follows. Accessory component of the DNA polymerase epsilon complex. Participates in DNA repair and in chromosomal DNA replication. Has a role in the entrance and progression through S phase. Has a role in endoreplication. Essential for viability and tissue development. The protein is DNA polymerase epsilon subunit 2 of Drosophila melanogaster (Fruit fly).